A 511-amino-acid chain; its full sequence is Maturase K (511 aa).

Belongs to the intron maturase 2 family. MatK subfamily.

The protein localises to the plastid. It is found in the chloroplast. Usually encoded in the trnK tRNA gene intron. Probably assists in splicing its own and other chloroplast group II introns. This Adesmia lanata protein is Maturase K.